A 1227-amino-acid polypeptide reads, in one-letter code: Methionine synthase (1227 aa).

Residues 2 to 325 (SSKVEQLRAQ…QHIAAMSRAV (324 aa)) enclose the Hcy-binding domain. Zn(2+) contacts are provided by cysteine 247, cysteine 310, and cysteine 311. Positions 356–617 (FVNVGERTNV…LPAELRDAVE (262 aa)) constitute a Pterin-binding domain. The B12-binding N-terminal domain occupies 650-744 (QQAEWRSWEV…FIEASKEQGK (95 aa)). Residues glutamate 694, 756–760 (GDVHD), histidine 759, serine 804, threonine 808, and alanine 860 each bind methylcob(III)alamin. The 136-residue stretch at 746 to 881 (NGKMVIATVK…SDTQRDDFVA (136 aa)) folds into the B12-binding domain. One can recognise an AdoMet activation domain in the interval 897 to 1227 (KKPRTPPVTL…LAPNLGYDAD (331 aa)). Residues aspartate 946, arginine 1134, and 1189–1190 (YY) each bind S-adenosyl-L-methionine.

This sequence belongs to the vitamin-B12 dependent methionine synthase family. Methylcob(III)alamin is required as a cofactor. Zn(2+) serves as cofactor.

The enzyme catalyses (6S)-5-methyl-5,6,7,8-tetrahydrofolate + L-homocysteine = (6S)-5,6,7,8-tetrahydrofolate + L-methionine. It functions in the pathway amino-acid biosynthesis; L-methionine biosynthesis via de novo pathway; L-methionine from L-homocysteine (MetH route): step 1/1. Catalyzes the transfer of a methyl group from methyl-cobalamin to homocysteine, yielding enzyme-bound cob(I)alamin and methionine. Subsequently, remethylates the cofactor using methyltetrahydrofolate. The protein is Methionine synthase (metH) of Escherichia coli (strain K12).